Consider the following 261-residue polypeptide: MPSMTSKVFAITGGASGIGAATCRLLAERDAAVICLADVSSTNFTSLQESIAKSNPSTLVHCTELDVRSADKVDQWLQSIVSTHGDLHGAANVAGIAQGAGLRATPTILEENDAEWSRILDVNLNGVFYSTRAQVRVMKDLPPGHRSIVNVASIAAFSHVPDVYAYGTSKSACAYLTTCIAADVFWSGIRVNCVSPGITNTPMLPQFEPKAKSLDAIKDMYRDQGYPTGEADGVARTIVWLLSEDSIPVYGANINVGACPP.

The signal sequence occupies residues 1–20; it reads MPSMTSKVFAITGGASGIGA. NADP(+) is bound at residue I18. N43 carries an N-linked (GlcNAc...) asparagine glycan. 5 residues coordinate NADP(+): D66, R132, Y166, K170, and T201. Y166 serves as the catalytic Proton donor. K170 acts as the Lowers pKa of active site Tyr in catalysis.

It belongs to the short-chain dehydrogenases/reductases (SDR) family. Homotetramer.

It catalyses the reaction chanoclavine-I + NAD(+) = chanoclavine-I aldehyde + NADH + H(+). The protein operates within alkaloid biosynthesis; ergot alkaloid biosynthesis. Functionally, chanoclavine-I dehydrogenase; part of the gene cluster that mediates the biosynthesis of fungal ergot alkaloid. DmaW catalyzes the first step of ergot alkaloid biosynthesis by condensing dimethylallyl diphosphate (DMAP) and tryptophan to form 4-dimethylallyl-L-tryptophan. The second step is catalyzed by the methyltransferase easF that methylates 4-dimethylallyl-L-tryptophan in the presence of S-adenosyl-L-methionine, resulting in the formation of 4-dimethylallyl-L-abrine. The catalase easC and the FAD-dependent oxidoreductase easE then transform 4-dimethylallyl-L-abrine to chanoclavine-I which is further oxidized by easD in the presence of NAD(+), resulting in the formation of chanoclavine-I aldehyde. Agroclavine dehydrogenase easG then mediates the conversion of chanoclavine-I aldehyde to agroclavine via a non-enzymatic adduct reaction: the substrate is an iminium intermediate that is formed spontaneously from chanoclavine-I aldehyde in the presence of glutathione. The presence of easA is not required to complete this reaction. Further conversion of agroclavine to paspalic acid is a two-step process involving oxidation of agroclavine to elymoclavine and of elymoclavine to paspalic acid, the second step being performed by the elymoclavine oxidase cloA. Paspalic acid is then further converted to D-lysergic acid. Ergopeptines are assembled from D-lysergic acid and three different amino acids by the D-lysergyl-peptide-synthetases composed each of a monomudular and a trimodular nonribosomal peptide synthetase subunit. LpsB and lpsC encode the monomodular subunits responsible for D-lysergic acid activation and incorporation into the ergopeptine backbone. LpsA1 and A2 subunits encode the trimodular nonribosomal peptide synthetase assembling the tripeptide portion of ergopeptines. LpsA1 is responsible for formation of the major ergopeptine, ergotamine, and lpsA2 for alpha-ergocryptine, the minor ergopeptine of the total alkaloid mixture elaborated by C.purpurea. D-lysergyl-tripeptides are assembled by the nonribosomal peptide synthetases and released as N-(D-lysergyl-aminoacyl)-lactams. Cyclolization of the D-lysergyl-tripeptides is performed by the Fe(2+)/2-ketoglutarate-dependent dioxygenase easH which introduces a hydroxyl group into N-(D-lysergyl-aminoacyl)-lactam at alpha-C of the aminoacyl residue followed by spontaneous condensation with the terminal lactam carbonyl group. This chain is Chanoclavine-I dehydrogenase easD, found in Claviceps purpurea (Ergot fungus).